A 119-amino-acid chain; its full sequence is uncharacterized protein (119 aa).

2 helical membrane-spanning segments follow: residues F57 to F77 and Y80 to H100.

The protein localises to the membrane. This is an uncharacterized protein from Saccharomyces cerevisiae (strain ATCC 204508 / S288c) (Baker's yeast).